Reading from the N-terminus, the 157-residue chain is Heavy metal-associated isoprenylated plant protein 16 (157 aa).

The HMA domain occupies 2 to 71; the sequence is KQKILIRIAM…KVAFAELVSV (70 aa). Residues 73-115 are disordered; it reads KVEPPKDGDKKPEEEKKPEEKKPEEKKPEEKKPEPCCQPWQKP. Over residues 75–106 the composition is skewed to basic and acidic residues; the sequence is EPPKDGDKKPEEEKKPEEKKPEEKKPEEKKPE. The residue at position 154 (Cys-154) is a Cysteine methyl ester. Cys-154 is lipidated: S-farnesyl cysteine. The propeptide at 155–157 is removed in mature form; sequence RIM.

This sequence belongs to the HIPP family.

Its function is as follows. Probable heavy-metal-binding protein. The protein is Heavy metal-associated isoprenylated plant protein 16 of Arabidopsis thaliana (Mouse-ear cress).